The chain runs to 373 residues: Spermidine/putrescine import ATP-binding protein PotA (373 aa).

In terms of domain architecture, ABC transporter spans 11-241 (IELRSLKKSY…PSNLFVAKFI (231 aa)). 43–50 (GPSGCGKT) serves as a coordination point for ATP.

It belongs to the ABC transporter superfamily. Spermidine/putrescine importer (TC 3.A.1.11.1) family. In terms of assembly, the complex is composed of two ATP-binding proteins (PotA), two transmembrane proteins (PotB and PotC) and a solute-binding protein (PotD).

Its subcellular location is the cell inner membrane. It carries out the reaction ATP + H2O + polyamine-[polyamine-binding protein]Side 1 = ADP + phosphate + polyamineSide 2 + [polyamine-binding protein]Side 1.. Part of the ABC transporter complex PotABCD involved in spermidine/putrescine import. Responsible for energy coupling to the transport system. This is Spermidine/putrescine import ATP-binding protein PotA from Mannheimia succiniciproducens (strain KCTC 0769BP / MBEL55E).